The chain runs to 793 residues: Protein translocase subunit SecA 2 (793 aa).

Residues Gln77, 95–99 (GEGKT), and Asp493 contribute to the ATP site.

Belongs to the SecA family. Monomer and homodimer (Potential). Part of the accessory SecA2/SecY2 protein translocation apparatus required to export cell wall protein GspB.

The protein resides in the cell membrane. It localises to the cytoplasm. It carries out the reaction ATP + H2O + cellular proteinSide 1 = ADP + phosphate + cellular proteinSide 2.. Its function is as follows. Part of the accessory SecA2/SecY2 system specifically required to export GspB, a serine-rich repeat cell wall protein encoded upstream in the same operon. This chain is Protein translocase subunit SecA 2, found in Streptococcus gordonii.